The sequence spans 343 residues: 4-hydroxy-2-oxovalerate aldolase 1 (343 aa).

Residues 8 to 260 (VTVHDMTLRD…ETGVDVAKIT (253 aa)) enclose the Pyruvate carboxyltransferase domain. 16–17 (RD) provides a ligand contact to substrate. Asp17 provides a ligand contact to Mn(2+). The Proton acceptor role is filled by His20. Substrate contacts are provided by Ser170 and His199. Mn(2+) is bound by residues His199 and His201. Tyr290 is a binding site for substrate.

This sequence belongs to the 4-hydroxy-2-oxovalerate aldolase family.

The catalysed reaction is (S)-4-hydroxy-2-oxopentanoate = acetaldehyde + pyruvate. This Dechloromonas aromatica (strain RCB) protein is 4-hydroxy-2-oxovalerate aldolase 1.